The sequence spans 2311 residues: MRNACLLLNRLGAFYFIWISAAYCSFSKNCQDLCTSNLEGELGIANLCNVSDINVACTQGCQFWNATEQVNCPLKCNKTYTRECETVSCKFGCSRAEDAYGVEAQNCLNKPGAPFASSIGSHNITLGWKPANISEVKYIIQWKFHQLPGDWRYTEVVSETSYTVKDLQAFTEYEFRVVWIITSQLQLHSPPSPSYRTHASGVPTTAPIIKDIQSSSPNTVEVSWFPPLFPNGLIVGYNLVLTSENHELLRASRGHSFQFYSTFPNSTYRFSIVAVNEAGAGPPAEANITTPESKVKEKAKWLFLSRNQSLRKRYMEHFLEAAHCLQNGIIHHNITGISVNVYQQVVYFSEGNSIWVKGVVDMSDVSDLTLFYTGWGNITSISVDWLYQRMYFVMNEKIHVCQLENCTAAEDITPPYETSPRKIVADPYNGYIFCLLEDGIYRANLPLFPDTASAASLVVKSHTLRDFMINFQSKRLIFFNKTEQAFVSGFLDGSEFHTLRAHVPLDDMESFVYEDNIFTVTDGRAVFHEEISQVGSSSFNEYVVDCSLEYPEYFGFGNLLFYAASTQPYPLPTLPRLVTVLFGSDQAVISWSPPEYTIGTSRSAWQNWTYDVKVSSQSTFEEEWVVSNITDTRFAVKNLVSFTEYEMSVRAVSPAGEGPWSEPFRGMTFEEAEEEPYILAVGAEGLWKQRLDSYGPGEFLYPHIRNISDLDWYNDTLYWSNSMGKVQTWSMNKKEGTTENSYVPDIKNARMLAFDWLGQCLYWAGKANTIYRKSLLGDHMDVVAHVVYVVKDLAVDSVNGYLYWATTYTVESARLNGEEYLILQEHLQFSGKQVVGLALDLTSGFLYWLVQDGLCLNLYRISICKESCGNIMVTEISAWSVSEVSQNALQYYSGRLFWINRLKFITTQELNQSISIPFSEPAEFAAFTLVHTSLKPLPGNFSFTPKVIPSSVPESSFKIKGNSSSFHIIWNASTDVQWGTVFYCVGSNALQMRTLESERCLHPHDLTVPSYKVDWLEPFTLFDFSVTPYTYWGKAPTTSVYLRAPEGVPSAPANPRIYVLHSNTHEGEEKVLVELRWDKPERDNGVLTQFRVYYQLLYESGAADTLMEWNVSDVKPTALLFSIRDEHPRLTVRFQVQAFTSVGPGPMSDVAQRNSSDIFPVPTLITFSSNKLFLTDIDSNHTIWEVLTNRNIKDICYTADDDKVYYILEDSLFLLNVQSTSESQLFEDVFLRNVTAITVDWIARHLFVAMKTSWNETQVFFIDLELKTKSLKALNIQLGKRNSTISSLLSYPFLSRLYWIEELDYGSRMFYYDILNNTMYHILGYESVEEKMRNYCNCNVAEAELGRPISIDVTDIKKPQLLFIRGRDEIWASDVDACHCWRITKIPSFQGTKIGSLTVDKQFIYWTIEKKEYTEICLADKESTRHSLQRKANHELKILAYSSAMQSYPDKKCLTPLLDTEKPTILDTTNTSFTLSLPSVTTQQLCPSISQPTPTYLVFFREITSNHENSTYHFSTLLQKTLEIQEPIAVINNLKPFSTYAIQVAVKNYYSNQNQLAVGREAISTTLYGVPEGVDSIKTVVLSDTTINISWSEPLEPNGPLESIRYQISVNLLSLFPEAPLRKSEFPNGTLSWSVSDLQSGTNNLFKVLAFHPNENWFSESVPVIAKTFETPLSPSNIIPRNTSFQLEWRAPLHINGTSFWFELSKWQTRSDWFSPASTTCTVGPVYTCNLTGTLPSANYLVRATVVYVTGMKSTSSPTSFKTTAGVPSKPGTPKRAEDSKNSVQWEKAEDNGSNLTYYILESRKQSGNTNKVKSLWVVVYNGSCDNICTWKAENLEGTFQFRAAAANMLGLGEYSDTSKDIVLAKDTVTSPDITAIVAVIGAVVLGLTIIILFGFVWHQRWKSRKPASTGQIVLVKEDKELAQLRGMAETVGLANACYAVSTLPSQAEIESLPAFPRDKLNLHKLLGSGAFGEVYEGTALDILADGSGESRVAVKTLKRGATDQEKSEFLKEAHLMSKFDHPHILKLLGVCLLNEPQYLILELMEGGDLLSYLRGARKQKFQSPLLTLTDLLDICLDICKGCVYLEKMRFIHRDLAARNCLVSEKQYGSCSRVVKIGDFGLARDIYKNDYYRKRGEGLINVRWMAPESLIDGVFTNHSDVWAFGVLVWETLTLGQQPYPGLSNIEVLHHVRSGGRLESPNNCPDDIRDLMTRCWAQDPHNRPTFFYIQHKLQEIRHSPLCFSYFLGDKESVAGFINQAFEDIDVPPADSDSILSTTLMEARDQEGLNYLVVVKESNQDQGSISSAELTSV.

Residues 1 to 24 (MRNACLLLNRLGAFYFIWISAAYC) form the signal peptide. At 25–1873 (SFSKNCQDLC…LAKDTVTSPD (1849 aa)) the chain is on the extracellular side. Asn49, Asn65, Asn77, Asn123, Asn132, Asn265, Asn287, Asn307, Asn333, Asn377, Asn405, Asn480, Asn607, Asn628, Asn706, Asn714, Asn911, Asn940, Asn962, Asn971, Asn1110, Asn1154, Asn1180, Asn1233, Asn1255, Asn1282, Asn1316, Asn1470, Asn1509, Asn1588, Asn1628, Asn1682, Asn1696, and Asn1730 each carry an N-linked (GlcNAc...) asparagine glycan. Fibronectin type-III domains follow at residues 110 to 202 (KPGA…ASGV) and 203 to 294 (PTTA…PESK). One can recognise a Fibronectin type-III 3 domain in the interval 571–671 (LPTLPRLVTV…EPFRGMTFEE (101 aa)). 2 consecutive Fibronectin type-III domains span residues 952-1047 (VPES…APEG) and 1051-1158 (APAN…SSDI). Fibronectin type-III domains lie at 1459-1569 (DTEK…TLYG), 1570-1669 (VPEG…AKTF), 1671-1766 (TPLS…TTAG), and 1767-1868 (VPSK…AKDT). Low complexity predominate over residues 1754-1764 (STSSPTSFKTT). Residues 1754 to 1786 (STSSPTSFKTTAGVPSKPGTPKRAEDSKNSVQW) are disordered. The span at 1775 to 1786 (KRAEDSKNSVQW) shows a compositional bias: basic and acidic residues. Residues Asn1792, Asn1795, and Asn1822 are each glycosylated (N-linked (GlcNAc...) asparagine). A helical membrane pass occupies residues 1874-1898 (ITAIVAVIGAVVLGLTIIILFGFVW). Residues 1899-2311 (HQRWKSRKPA…SISSAELTSV (413 aa)) lie on the Cytoplasmic side of the membrane. The Protein kinase domain maps to 1961–2240 (LNLHKLLGSG…KLQEIRHSPL (280 aa)). ATP is bound by residues 1967-1975 (LGSGAFGEV) and Lys1996. Asp2095 (proton acceptor) is an active-site residue. At Tyr2131 the chain carries Phosphotyrosine; by autocatalysis.

This sequence belongs to the protein kinase superfamily. Tyr protein kinase family. Insulin receptor subfamily. As to quaternary structure, interacts with VAV3; constitutive interaction mediating VAV3 phosphorylation. In terms of tissue distribution, highest expression in kidney. Also expressed in gonad, thymus, bursa, brain and kidney.

It localises to the cell membrane. It carries out the reaction L-tyrosyl-[protein] + ATP = O-phospho-L-tyrosyl-[protein] + ADP + H(+). Functionally, orphan receptor tyrosine kinase (RTK) that may activate several downstream signaling pathways related to cell differentiation, proliferation, growth and survival including the PI3 kinase-mTOR signaling pathway. Mediates the phosphorylation of PTPN11, an activator of this pathway. May also phosphorylate and activate the transcription factor STAT3 to control anchorage-independent cell growth. Mediates the phosphorylation and the activation of VAV3, a guanine nucleotide exchange factor regulating cell morphology. May activate other downstream signaling proteins including AKT1, MAPK1, MAPK3, IRS1, and PLCG2. The protein is Proto-oncogene tyrosine-protein kinase ROS (ROS1) of Gallus gallus (Chicken).